The following is a 673-amino-acid chain: DNA ligase (673 aa).

Residues 38–42 (DSVYD), 87–88 (SL), and Glu119 contribute to the NAD(+) site. The active-site N6-AMP-lysine intermediate is Lys121. NAD(+) contacts are provided by Arg142, Glu179, Lys296, and Lys320. 4 residues coordinate Zn(2+): Cys414, Cys417, Cys432, and Cys438. The 79-residue stretch at 595–673 (VVKSEIAGKT…EEAFLKLLKS (79 aa)) folds into the BRCT domain.

This sequence belongs to the NAD-dependent DNA ligase family. LigA subfamily. The cofactor is Mg(2+). Mn(2+) is required as a cofactor.

It catalyses the reaction NAD(+) + (deoxyribonucleotide)n-3'-hydroxyl + 5'-phospho-(deoxyribonucleotide)m = (deoxyribonucleotide)n+m + AMP + beta-nicotinamide D-nucleotide.. Its function is as follows. DNA ligase that catalyzes the formation of phosphodiester linkages between 5'-phosphoryl and 3'-hydroxyl groups in double-stranded DNA using NAD as a coenzyme and as the energy source for the reaction. It is essential for DNA replication and repair of damaged DNA. The sequence is that of DNA ligase from Coxiella burnetii (strain RSA 493 / Nine Mile phase I).